The following is a 437-amino-acid chain: Probable N-acetylmuramidase (437 aa).

The N-terminal stretch at 1-57 (MPVSRVKVKNRHLKKKTKKPLAFYKPTTKFVGAVLIAGTLTTTHELLLQQTSPMVQA) is a signal peptide. Disordered stretches follow at residues 217 to 244 (SSAG…SSTT), 291 to 319 (SSTN…ASQT), and 367 to 392 (ATSN…NSNA). One can recognise a LysM 1 domain in the interval 243–286 (TTYTVKSGDTLWGISQRYGISVAQIQSANNLKSTIIYIGQKLLL). Positions 291 to 317 (SSTNSGGSNNSASTTPTTSVTPAKPAS) are enriched in low complexity. A LysM 2 domain is found at 319-362 (TSVKVKSGDTLWALSVKYKTSIAQLKSWNHLSSDTIYIGQNLIV). The region spanning 393-436 (SIHKVVKGDTLWGLSQKSGSPIASIKAWNHLSSDTILIGQYLRI) is the LysM 3 domain.

This sequence belongs to the glycosyl hydrolase 73 family.

It is found in the secreted. It catalyses the reaction Hydrolysis of (1-&gt;4)-beta-linkages between N-acetylmuramic acid and N-acetyl-D-glucosamine residues in a peptidoglycan and between N-acetyl-D-glucosamine residues in chitodextrins.. Hydrolyzes the cell wall of L.lactis and M.lysodeikticus. Required for cell separation during growth. In Lactococcus lactis subsp. cremoris (Streptococcus cremoris), this protein is Probable N-acetylmuramidase (acmA).